We begin with the raw amino-acid sequence, 318 residues long: Transaldolase (318 aa).

Lys-126 functions as the Schiff-base intermediate with substrate in the catalytic mechanism.

Belongs to the transaldolase family. Type 1 subfamily. In terms of assembly, homodimer.

The protein localises to the cytoplasm. The catalysed reaction is D-sedoheptulose 7-phosphate + D-glyceraldehyde 3-phosphate = D-erythrose 4-phosphate + beta-D-fructose 6-phosphate. Its pathway is carbohydrate degradation; pentose phosphate pathway; D-glyceraldehyde 3-phosphate and beta-D-fructose 6-phosphate from D-ribose 5-phosphate and D-xylulose 5-phosphate (non-oxidative stage): step 2/3. Its function is as follows. Transaldolase is important for the balance of metabolites in the pentose-phosphate pathway. In Variovorax paradoxus (strain S110), this protein is Transaldolase.